The chain runs to 338 residues: Lipoate-protein ligase A (338 aa).

One can recognise a BPL/LPL catalytic domain in the interval Pro29–Val216. ATP-binding positions include Arg71, Gly76–Phe79, and Lys134. Lys134 is a binding site for (R)-lipoate.

It belongs to the LplA family. Monomer.

The protein resides in the cytoplasm. The catalysed reaction is L-lysyl-[lipoyl-carrier protein] + (R)-lipoate + ATP = N(6)-[(R)-lipoyl]-L-lysyl-[lipoyl-carrier protein] + AMP + diphosphate + H(+). It participates in protein modification; protein lipoylation via exogenous pathway; protein N(6)-(lipoyl)lysine from lipoate: step 1/2. The protein operates within protein modification; protein lipoylation via exogenous pathway; protein N(6)-(lipoyl)lysine from lipoate: step 2/2. In terms of biological role, catalyzes both the ATP-dependent activation of exogenously supplied lipoate to lipoyl-AMP and the transfer of the activated lipoyl onto the lipoyl domains of lipoate-dependent enzymes. The sequence is that of Lipoate-protein ligase A from Cronobacter sakazakii (strain ATCC BAA-894) (Enterobacter sakazakii).